We begin with the raw amino-acid sequence, 457 residues long: Argininosuccinate lyase (457 aa).

This sequence belongs to the lyase 1 family. Argininosuccinate lyase subfamily.

Its subcellular location is the cytoplasm. It catalyses the reaction 2-(N(omega)-L-arginino)succinate = fumarate + L-arginine. It functions in the pathway amino-acid biosynthesis; L-arginine biosynthesis; L-arginine from L-ornithine and carbamoyl phosphate: step 3/3. The sequence is that of Argininosuccinate lyase from Erwinia tasmaniensis (strain DSM 17950 / CFBP 7177 / CIP 109463 / NCPPB 4357 / Et1/99).